A 101-amino-acid polypeptide reads, in one-letter code: Large ribosomal subunit protein uL23 (101 aa).

Belongs to the universal ribosomal protein uL23 family. In terms of assembly, part of the 50S ribosomal subunit. Contacts protein L29, and trigger factor when it is bound to the ribosome.

Its function is as follows. One of the early assembly proteins it binds 23S rRNA. One of the proteins that surrounds the polypeptide exit tunnel on the outside of the ribosome. Forms the main docking site for trigger factor binding to the ribosome. The protein is Large ribosomal subunit protein uL23 of Corynebacterium kroppenstedtii (strain DSM 44385 / JCM 11950 / CIP 105744 / CCUG 35717).